The chain runs to 204 residues: Recombination protein RecR (204 aa).

Residues 58 to 75 form a C4-type zinc finger; that stretch reads CSICQNVTDRDADPCRIC. The Toprim domain maps to 83-181; it reads SVICVVESPV…MVTKIARGIP (99 aa).

It belongs to the RecR family.

May play a role in DNA repair. It seems to be involved in an RecBC-independent recombinational process of DNA repair. It may act with RecF and RecO. This Chlorobium phaeovibrioides (strain DSM 265 / 1930) (Prosthecochloris vibrioformis (strain DSM 265)) protein is Recombination protein RecR.